Consider the following 2223-residue polypeptide: Sperm-associated antigen 17 (2223 aa).

Composition is skewed to basic and acidic residues over residues 144–172 (RENE…EKKA) and 200–212 (RRGE…RYID). The disordered stretch occupies residues 144–214 (RENEKKVIED…DHTNRYIDDE (71 aa)). A coiled-coil region spans residues 266-295 (NQQQEVLLQSEDLEAEKLKKENAIKELKTF). 6 disordered regions span residues 387–416 (MPTS…PPPV), 680–710 (MSVQ…LNNL), 731–762 (PQHE…PKKM), 950–1015 (EERL…EPKI), 1179–1212 (GKIK…PEPV), and 1345–1378 (ETIP…PPPE). Basic and acidic residues-rich tracts occupy residues 743-756 (EIKD…DSHE), 950-999 (EERL…EQVK), and 1182-1205 (KGKE…KKEE). A coiled-coil region spans residues 940-966 (WKEEQHRLAEEERLREEKKAEKKGKEA). Residues 1345-1354 (ETIPSEITNT) are compositionally biased toward polar residues. Positions 1874-1907 (RHTASSKRWKEKIDKTRKEIETTQNYLMDIKNRI) form a coiled coil. 2 disordered regions span residues 1938-1957 (TKKN…DLNL) and 1962-2008 (HKVS…SYEP). Residues 1988–1998 (TAQNQTENLTK) are compositionally biased toward polar residues.

In terms of assembly, interacts (via the C-terminus) with SPAG6; the interaction probably occurs on polymerized microtubules. Highly expressed in testis. Expressed in organs that contain cilia-bearing cells including brain, oviduct, lung, and uterus.

Its subcellular location is the cytoplasm. It localises to the cytoskeleton. The protein resides in the flagellum axoneme. The protein localises to the cytoplasmic vesicle. It is found in the secretory vesicle. Its subcellular location is the acrosome. It localises to the golgi apparatus. In terms of biological role, component of the central pair apparatus of ciliary axonemes. Plays a critical role in the function and structure of motile cilia. May play a role in endochondral bone formation, most likely because of a function in primary cilia of chondrocytes and osteoblasts. Essential for normal spermatogenesis and male fertility. Required for normal manchette structure, transport of proteins along the manchette microtubules and formation of the sperm head and flagellum. Essential for sperm flagellum development and proper assembly of the respiratory motile cilia central pair apparatus, but not the brain ependymal cilia. This is Sperm-associated antigen 17 (SPAG17) from Homo sapiens (Human).